The primary structure comprises 817 residues: DNA gyrase subunit A (817 aa).

The Topo IIA-type catalytic domain occupies 39-505 (LPDARDGLKP…AVEDVSIEDL (467 aa)). Tyr-127 acts as the O-(5'-phospho-DNA)-tyrosine intermediate in catalysis. The short motif at 532–538 (QGRGGKG) is the GyrA-box element.

It belongs to the type II topoisomerase GyrA/ParC subunit family. As to quaternary structure, heterotetramer, composed of two GyrA and two GyrB chains. In the heterotetramer, GyrA contains the active site tyrosine that forms a transient covalent intermediate with DNA, while GyrB binds cofactors and catalyzes ATP hydrolysis.

The protein localises to the cytoplasm. The enzyme catalyses ATP-dependent breakage, passage and rejoining of double-stranded DNA.. In terms of biological role, a type II topoisomerase that negatively supercoils closed circular double-stranded (ds) DNA in an ATP-dependent manner to modulate DNA topology and maintain chromosomes in an underwound state. Negative supercoiling favors strand separation, and DNA replication, transcription, recombination and repair, all of which involve strand separation. Also able to catalyze the interconversion of other topological isomers of dsDNA rings, including catenanes and knotted rings. Type II topoisomerases break and join 2 DNA strands simultaneously in an ATP-dependent manner. The polypeptide is DNA gyrase subunit A (Aminobacterium colombiense (strain DSM 12261 / ALA-1)).